A 170-amino-acid chain; its full sequence is Small ribosomal subunit protein bS18c (170 aa).

Disordered regions lie at residues 1-59 and 151-170; these read MYIS…IGPG and NLRN…SSDC. 7 repeats span residues 4 to 10, 11 to 17, 18 to 24, 25 to 31, 32 to 38, 39 to 45, and 46 to 52; these read SKQPFRK, SKQTFHK, FKQPFRK, and SKQPFRR. The segment at 4–52 is 7 X 7 AA tandem repeats; it reads SKQPFRKSKQPFRKSKQTFHKSKQPFRKFKQPFRKSKQPFRKSKQPFRR. The segment covering 7 to 55 has biased composition (basic residues); the sequence is PFRKSKQPFRKSKQTFHKSKQPFRKFKQPFRKSKQPFRKSKQPFRRRSR.

It belongs to the bacterial ribosomal protein bS18 family. Part of the 30S ribosomal subunit.

The protein resides in the plastid. It localises to the chloroplast. This is Small ribosomal subunit protein bS18c (rps18) from Zea mays (Maize).